The primary structure comprises 352 residues: Diacylglycerol acyltransferase/mycolyltransferase Ag85C (352 aa).

An N-terminal signal peptide occupies residues Met1–Ala37. Residue Leu86–Arg87 coordinates substrate. The interval Phe102 to Val112 is fibronectin-binding. Residues Ser170 and Asn198 each coordinate substrate. Ser170 serves as the catalytic Nucleophile. Glu274 is an active-site residue. Residues Leu276–Arg279 and His306–Trp308 each bind substrate. His306 is an active-site residue. Residues Thr332–Thr352 form a disordered region. Over residues Ala333–Thr352 the composition is skewed to low complexity.

It belongs to the mycobacterial A85 antigen family. Homodimer.

Its subcellular location is the secreted. The enzyme catalyses an acyl-CoA + a 1,2-diacyl-sn-glycerol = a triacyl-sn-glycerol + CoA. The catalysed reaction is 2 alpha,alpha'-trehalose 6-mycolate = alpha,alpha'-trehalose 6,6'-bismycolate + alpha,alpha-trehalose. Its function is as follows. The antigen 85 proteins (FbpA, FbpB, FbpC) are responsible for the high affinity of mycobacteria to fibronectin, a large adhesive glycoprotein, which facilitates the attachment of M.tuberculosis to murine alveolar macrophages (AMs). They also help to maintain the integrity of the cell wall by catalyzing the transfer of mycolic acids to cell wall arabinogalactan and through the synthesis of alpha,alpha-trehalose dimycolate (TDM, cord factor). They catalyze the transfer of a mycoloyl residue from one molecule of alpha,alpha-trehalose monomycolate (TMM) to another TMM, leading to the formation of TDM. This Mycobacterium avium protein is Diacylglycerol acyltransferase/mycolyltransferase Ag85C (fbpC).